A 130-amino-acid chain; its full sequence is Small ribosomal subunit protein uS11 (130 aa).

It belongs to the universal ribosomal protein uS11 family. Part of the 30S ribosomal subunit. Interacts with proteins S7 and S18. Binds to IF-3.

Functionally, located on the platform of the 30S subunit, it bridges several disparate RNA helices of the 16S rRNA. Forms part of the Shine-Dalgarno cleft in the 70S ribosome. This chain is Small ribosomal subunit protein uS11, found in Campylobacter jejuni subsp. jejuni serotype O:6 (strain 81116 / NCTC 11828).